A 351-amino-acid polypeptide reads, in one-letter code: Dihydroorotate dehydrogenase (quinone) (351 aa).

Residues 61 to 65 and T85 contribute to the FMN site; that span reads AGLDK. A substrate-binding site is contributed by K65. 110–114 contacts substrate; it reads NRMGF. Residues N139 and N172 each coordinate FMN. Residue N172 coordinates substrate. S175 acts as the Nucleophile in catalysis. Substrate is bound at residue N177. The FMN site is built by K217 and T245. 246 to 247 is a substrate binding site; the sequence is NT. Residues G268, G297, and 318 to 319 contribute to the FMN site; that span reads YS.

It belongs to the dihydroorotate dehydrogenase family. Type 2 subfamily. In terms of assembly, monomer. FMN is required as a cofactor.

The protein localises to the cell membrane. It carries out the reaction (S)-dihydroorotate + a quinone = orotate + a quinol. Its pathway is pyrimidine metabolism; UMP biosynthesis via de novo pathway; orotate from (S)-dihydroorotate (quinone route): step 1/1. Catalyzes the conversion of dihydroorotate to orotate with quinone as electron acceptor. In Xanthomonas oryzae pv. oryzae (strain MAFF 311018), this protein is Dihydroorotate dehydrogenase (quinone).